The following is a 339-amino-acid chain: Glycerol-3-phosphate dehydrogenase [NAD(P)+] (339 aa).

NADPH is bound by residues serine 15, tyrosine 16, histidine 36, and lysine 110. Sn-glycerol 3-phosphate-binding residues include lysine 110, glycine 139, and threonine 141. Alanine 143 provides a ligand contact to NADPH. Sn-glycerol 3-phosphate-binding residues include lysine 195, aspartate 248, serine 258, arginine 259, and asparagine 260. Residue lysine 195 is the Proton acceptor of the active site. Residue arginine 259 coordinates NADPH. The NADPH site is built by valine 283 and glutamate 285.

The protein belongs to the NAD-dependent glycerol-3-phosphate dehydrogenase family.

It is found in the cytoplasm. The catalysed reaction is sn-glycerol 3-phosphate + NAD(+) = dihydroxyacetone phosphate + NADH + H(+). It carries out the reaction sn-glycerol 3-phosphate + NADP(+) = dihydroxyacetone phosphate + NADPH + H(+). The protein operates within membrane lipid metabolism; glycerophospholipid metabolism. Catalyzes the reduction of the glycolytic intermediate dihydroxyacetone phosphate (DHAP) to sn-glycerol 3-phosphate (G3P), the key precursor for phospholipid synthesis. This chain is Glycerol-3-phosphate dehydrogenase [NAD(P)+], found in Escherichia fergusonii (strain ATCC 35469 / DSM 13698 / CCUG 18766 / IAM 14443 / JCM 21226 / LMG 7866 / NBRC 102419 / NCTC 12128 / CDC 0568-73).